The following is a 763-amino-acid chain: Thyrotropin receptor (763 aa).

The N-terminal stretch at 1–21 is a signal peptide; it reads MRQTPLLQLALLLSLPRSLGG. At 22-412 the chain is on the extracellular side; it reads KGCPSPPCEC…EFNPCEDIMG (391 aa). Cysteines 31 and 41 form a disulfide. N-linked (GlcNAc...) asparagine glycosylation is found at asparagine 77 and asparagine 99. LRR repeat units follow at residues 100-124, 125-150, 151-174, 176-199, 201-223, 225-248, and 264-288; these read LSKM…ALKE, LPLL…VYST, DVFF…AFQG, CNET…AFNG, KLDA…AFGG, YSGP…GLEH, and PLTL…AFKN. Residues asparagine 177 and asparagine 198 are each glycosylated (N-linked (GlcNAc...) asparagine). Asparagine 302 is a glycosylation site (N-linked (GlcNAc...) asparagine). At tyrosine 384 the chain carries Sulfotyrosine. A helical membrane pass occupies residues 413–440; the sequence is YKFLRIVVWFVSLLALLGNVFVLIILLT. At 441-449 the chain is on the cytoplasmic side; sequence SHYKLTVPR. The chain crosses the membrane as a helical span at residues 450 to 472; that stretch reads FLMCNLAFADFCMGMYLLLIASV. Topologically, residues 473–493 are extracellular; that stretch reads DLYTHSEYYNHAIDWQTGPGC. Cysteine 493 and cysteine 568 are joined by a disulfide. The chain crosses the membrane as a helical span at residues 494 to 516; it reads NAAGFFTVFASELSVYTLTVITL. At 517 to 536 the chain is on the cytoplasmic side; it reads ERWYAITFAMRLDRKMRLRH. A helical membrane pass occupies residues 537 to 559; sequence AYAIMVGGWVCCFLLALLPLVGI. Topologically, residues 560 to 579 are extracellular; it reads SSYAKVSICLPMDTETPLAL. A helical transmembrane segment spans residues 580–601; it reads AYIILVLLLNIVAFIIVCSCYV. Residues 602–624 lie on the Cytoplasmic side of the membrane; that stretch reads KIYITVRNPQYNTGDKDTKIAKR. Residues 625-648 form a helical membrane-spanning segment; it reads MAVLIFTDFMCMAPISFYALSALM. Topologically, residues 649–659 are extracellular; that stretch reads NKPLITVTNSK. The chain crosses the membrane as a helical span at residues 660 to 681; sequence ILLVLFYPLNSCANPFLYAIFT. At 682–763 the chain is on the cytoplasmic side; it reads KTFQRDVFIL…ISKEYNQTVL (82 aa). Residues 761–763 carry the PDZ-binding motif; that stretch reads TVL.

It belongs to the G-protein coupled receptor 1 family. FSH/LSH/TSH subfamily. Interacts with heterodimer GPHA2:GPHB5; this interaction stimulates cAMP production. Interacts (via the PDZ-binding motif) with SCRIB; regulates TSHR trafficking and function. Post-translationally, glycosylated. In terms of processing, sulfated. Sulfation on Tyr-384 plays a role in thyrotropin receptor binding and activation.

It is found in the cell membrane. The protein localises to the basolateral cell membrane. Functionally, receptor for the thyroid-stimulating hormone (TSH) or thyrotropin. Also acts as a receptor for the heterodimeric glycoprotein hormone (GPHA2:GPHB5) or thyrostimulin. The activity of this receptor is mediated by G proteins which activate adenylate cyclase. Plays a central role in controlling thyroid cell metabolism. The chain is Thyrotropin receptor (TSHR) from Felis catus (Cat).